The chain runs to 687 residues: Polyphosphate kinase (687 aa).

An ATP-binding site is contributed by asparagine 45. Mg(2+)-binding residues include arginine 375 and arginine 405. Residue histidine 435 is the Phosphohistidine intermediate of the active site. The ATP site is built by tyrosine 472, arginine 568, and histidine 596.

This sequence belongs to the polyphosphate kinase 1 (PPK1) family. Mg(2+) is required as a cofactor. An intermediate of this reaction is the autophosphorylated ppk in which a phosphate is covalently linked to a histidine residue through a N-P bond.

The catalysed reaction is [phosphate](n) + ATP = [phosphate](n+1) + ADP. Its function is as follows. Catalyzes the reversible transfer of the terminal phosphate of ATP to form a long-chain polyphosphate (polyP). The sequence is that of Polyphosphate kinase from Burkholderia lata (strain ATCC 17760 / DSM 23089 / LMG 22485 / NCIMB 9086 / R18194 / 383).